A 427-amino-acid polypeptide reads, in one-letter code: Anhydro-N-acetylmuramic acid kinase (427 aa).

An ATP-binding site is contributed by G32–D39.

The protein belongs to the anhydro-N-acetylmuramic acid kinase family.

It carries out the reaction 1,6-anhydro-N-acetyl-beta-muramate + ATP + H2O = N-acetyl-D-muramate 6-phosphate + ADP + H(+). Its pathway is amino-sugar metabolism; 1,6-anhydro-N-acetylmuramate degradation. The protein operates within cell wall biogenesis; peptidoglycan recycling. Functionally, catalyzes the specific phosphorylation of 1,6-anhydro-N-acetylmuramic acid (anhMurNAc) with the simultaneous cleavage of the 1,6-anhydro ring, generating MurNAc-6-P. Is required for the utilization of anhMurNAc either imported from the medium or derived from its own cell wall murein, and thus plays a role in cell wall recycling. The protein is Anhydro-N-acetylmuramic acid kinase of Psychrobacter cryohalolentis (strain ATCC BAA-1226 / DSM 17306 / VKM B-2378 / K5).